A 96-amino-acid polypeptide reads, in one-letter code: UPF0235 protein YggU (96 aa).

It belongs to the UPF0235 family.

This chain is UPF0235 protein YggU, found in Salmonella typhi.